We begin with the raw amino-acid sequence, 326 residues long: Flap endonuclease 1 (326 aa).

Positions 1-98 (MGVQFGDFIP…KTRKVRREMK (98 aa)) are N-domain. Mg(2+)-binding residues include aspartate 27, aspartate 80, glutamate 152, glutamate 154, aspartate 173, aspartate 175, and aspartate 224. The segment at 116 to 245 (EAAKYAKRVS…KRAYELVRSG (130 aa)) is I-domain. Residues 317–325 (KQKTLDAWF) are interaction with PCNA.

The protein belongs to the XPG/RAD2 endonuclease family. FEN1 subfamily. In terms of assembly, interacts with PCNA. PCNA stimulates the nuclease activity without altering cleavage specificity. The cofactor is Mg(2+).

Structure-specific nuclease with 5'-flap endonuclease and 5'-3' exonuclease activities involved in DNA replication and repair. During DNA replication, cleaves the 5'-overhanging flap structure that is generated by displacement synthesis when DNA polymerase encounters the 5'-end of a downstream Okazaki fragment. Binds the unpaired 3'-DNA end and kinks the DNA to facilitate 5' cleavage specificity. Cleaves one nucleotide into the double-stranded DNA from the junction in flap DNA, leaving a nick for ligation. Also involved in the base excision repair (BER) pathway. Acts as a genome stabilization factor that prevents flaps from equilibrating into structures that lead to duplications and deletions. Also possesses 5'-3' exonuclease activity on nicked or gapped double-stranded DNA. The sequence is that of Flap endonuclease 1 from Methanocaldococcus jannaschii (strain ATCC 43067 / DSM 2661 / JAL-1 / JCM 10045 / NBRC 100440) (Methanococcus jannaschii).